An 861-amino-acid chain; its full sequence is MKLGWIEVAALAAASVVSAKDDLAYSPPFYPSPWADGQGEWAEVYKRAVDIVSQMTLTEKVNLTTGTGWQLERCVGQTGSVPRLNIPSLCLQDSPLGIRFSDYNSAFPAGVNVAATWDKTLAYLRGQAMGEEFSDKGIDVQLGPAAGPLGAHPDGGRNWEGFSPDPALTGVLFAETIRGIQDAGVIATAKHYIMNEQEHFRQQPEAAGYGFNVSDSLSSNVDDKTMHELYLWPFADAVRAGVGAVMCSYNQINNSYGCENSETLNKLLKAELGFQGFVMSDWTAHHSGVGAALAGLDMSMPGDVTFDSGTSFWGANLTVGVLNGTIPQWRVDDMAVRIMAAYYKVGRDTKYTPPNFSSWTRDEYGFAHNHVSEGAYERVNEFVDVQRDHADLIRRIGAQSTVLLKNKGALPLSRKEKLVALLGEDAGSNSWGANGCDDRGCDNGTLAMAWGSGTANFPYLVTPEQAIQNEVLQGRGNVFAVTDSWALDKIAAAARQASVSLVFVNSDSGEGYLSVDGNEGDRNNITLWKNGDNVVKTAAENCNNTVVIIHSVGPVLIDEWYDHPNVTGILWAGLPGQESGNSIADVLYGRVNPGAKSPFTWGKTRESYGSPLVKDANNGNGAPQSDFTQGVFIDYRHFDKFNETPIYEFGYGLSYTTFELSDLHVQPLNASRYTPTSGMTEAAKNFGEIGDASEYVYPEGLERIHEFIYPWINSTDLKASSDDSNYGWEDSKYIPEGATDGSAQPLLPASGGAGGNPGLYEDLFRVSVKVKNTGNVAGDEVPQLYVSLGGPNEPKVVLRKFERIHLAPSQEAVWTTTLTRRDLANWDVSAQDWTVTPYPKTIYVGNSSRKLPLQASLPKAQ.

The signal sequence occupies residues methionine 1–alanine 19. N-linked (GlcNAc...) asparagine glycans are attached at residues asparagine 62, asparagine 212, and asparagine 253. The active site involves aspartate 281. 10 N-linked (GlcNAc...) asparagine glycosylation sites follow: asparagine 316, asparagine 323, asparagine 355, asparagine 443, asparagine 524, asparagine 543, asparagine 565, asparagine 669, asparagine 713, and asparagine 846.

The protein belongs to the glycosyl hydrolase 3 family.

The protein localises to the secreted. The enzyme catalyses Hydrolysis of terminal, non-reducing beta-D-glucosyl residues with release of beta-D-glucose.. It functions in the pathway glycan metabolism; cellulose degradation. Beta-glucosidases are one of a number of cellulolytic enzymes involved in the degradation of cellulosic biomass. Catalyzes the last step releasing glucose from the inhibitory cellobiose. The sequence is that of Probable beta-glucosidase A (bglA) from Aspergillus flavus (strain ATCC 200026 / FGSC A1120 / IAM 13836 / NRRL 3357 / JCM 12722 / SRRC 167).